The following is a 449-amino-acid chain: Probable glycine dehydrogenase (decarboxylating) subunit 1 (449 aa).

Belongs to the GcvP family. N-terminal subunit subfamily. As to quaternary structure, the glycine cleavage system is composed of four proteins: P, T, L and H. In this organism, the P 'protein' is a heterodimer of two subunits.

The enzyme catalyses N(6)-[(R)-lipoyl]-L-lysyl-[glycine-cleavage complex H protein] + glycine + H(+) = N(6)-[(R)-S(8)-aminomethyldihydrolipoyl]-L-lysyl-[glycine-cleavage complex H protein] + CO2. Functionally, the glycine cleavage system catalyzes the degradation of glycine. The P protein binds the alpha-amino group of glycine through its pyridoxal phosphate cofactor; CO(2) is released and the remaining methylamine moiety is then transferred to the lipoamide cofactor of the H protein. The protein is Probable glycine dehydrogenase (decarboxylating) subunit 1 of Pyrococcus horikoshii (strain ATCC 700860 / DSM 12428 / JCM 9974 / NBRC 100139 / OT-3).